The chain runs to 579 residues: MNKLYIGNLSENAAPSDLESIFKDAKIPVSGPFLVKTGYAFVDCPDESWALKAIEALSGKIELHGKPIEVEHSVPKRQRIRKLQIRNIPPHLQWEVLDSLLVQYGVVESCEQVNTDSETAVVNVTYSSKDQARQALDKLNGFQLENFTLKVAYIPDEMAAQQNPLQQPRGRRGLGQRGSSRQGSPGSVSKQKPCDLPLRLLVPTQFVGAIIGKEGATIRNITKQTQSKIDVHRKENAGAAEKSITILSTPEGTSAACKSILEIMHKEAQDIKFTEEIPLKILAHNNFVGRLIGKEGRNLKKIEQDTDTKITISPLQELTLYNPERTITVKGNVETCAKAEEEIMKKIRESYENDIASMNLQAHLIPGLNLNALGLFPPTSGMPPPTSGPPSAMTPPYPQFEQSETETVHLFIPALSVGAIIGKQGQHIKQLSRFAGASIKIAPAEAPDAKVRMVIITGPPEAQFKAQGRIYGKIKEENFVSPKEEVKLEAHIRVPSFAAGRVIGKGGKTVNELQNLSSAEVVVPRDQTPDENDQVVVKITGHFYACQVAQRKIQEILTQVKQHQQQKALQSGPPQSRRK.

RRM domains follow at residues 2-75 (NKLY…HSVP) and 81-156 (RKLQ…YIPD). A disordered region spans residues 160 to 192 (AQQNPLQQPRGRRGLGQRGSSRQGSPGSVSKQK). Positions 177–187 (RGSSRQGSPGS) are enriched in low complexity. S184 carries the phosphoserine modification. KH domains are found at residues 195 to 260 (DLPL…CKSI), 276 to 343 (EIPL…EEEI), and 405 to 470 (TETV…QGRI). Residues K450 and K475 each participate in a glycyl lysine isopeptide (Lys-Gly) (interchain with G-Cter in SUMO2) cross-link. The 67-residue stretch at 487–553 (KLEAHIRVPS…YACQVAQRKI (67 aa)) folds into the KH 4 domain. T528 carries the post-translational modification Phosphothreonine.

Belongs to the RRM IMP/VICKZ family. In terms of assembly, can form homooligomers and heterooligomers with IGF2BP1 and IGF2BP3 in an RNA-dependent manner. Interacts with IGF2BP1. Interacts with ELAVL1, DHX9, HNRNPU, MATR3 and PABPC1. In terms of tissue distribution, expressed in fetal liver, fetal lung, fetal kidney, fetal thymus, fetal placenta, fetal follicles of ovary and gonocytes of testis, growing oocytes, spermatogonia and semen (at protein level). Expressed in cervix adenocarcinoma, in testicular, pancreatic and renal-cell carcinomas (at protein level). Expressed ubiquitously during fetal development at 8 and 14 weeks of gestation. Expressed in ovary, testis, brain, placenta, pancreatic cancer tissues and pancreatic cancer cell lines.

The protein resides in the nucleus. It localises to the cytoplasm. The protein localises to the P-body. It is found in the stress granule. Functionally, RNA-binding factor that may recruit target transcripts to cytoplasmic protein-RNA complexes (mRNPs). This transcript 'caging' into mRNPs allows mRNA transport and transient storage. It also modulates the rate and location at which target transcripts encounter the translational apparatus and shields them from endonuclease attacks or microRNA-mediated degradation. Preferentially binds to N6-methyladenosine (m6A)-containing mRNAs and increases their stability. Binds to the 3'-UTR of CD44 mRNA and stabilizes it, hence promotes cell adhesion and invadopodia formation in cancer cells. Binds to beta-actin/ACTB and MYC transcripts. Increases MYC mRNA stability by binding to the coding region instability determinant (CRD) and binding is enhanced by m6A-modification of the CRD. Binds to the 5'-UTR of the insulin-like growth factor 2 (IGF2) mRNAs. This chain is Insulin-like growth factor 2 mRNA-binding protein 3 (IGF2BP3), found in Homo sapiens (Human).